The following is a 701-amino-acid chain: Acetyl-coenzyme A synthetase, cytoplasmic (701 aa).

Residues 1–26 (MGLPEERRKSGSGSRAREETGAEGRV) are compositionally biased toward basic and acidic residues. The segment at 1 to 37 (MGLPEERRKSGSGSRAREETGAEGRVRGWSPPPEVRR) is disordered. An interaction with TFEB region spans residues 1–107 (MGLPEERRKS…GATTNICYNV (107 aa)). At Ser30 the chain carries Phosphoserine. 219 to 222 (RGEK) serves as a coordination point for CoA. Ser263, Ser265, and Ser267 each carry phosphoserine. Residue Thr363 coordinates CoA. Lys418 is modified (N6-acetyllysine). ATP is bound by residues 439 to 441 (GEP), 463 to 468 (DTFWQT), Asp552, and Arg567. Residues Ser575 and Arg636 each contribute to the CoA site. The Nuclear localization signal motif lies at 656–668 (KTRSGKIMRRVLR). Position 659 is a phosphoserine; by AMPK (Ser659). Lys661 is modified (N6-acetyllysine).

Belongs to the ATP-dependent AMP-binding enzyme family. As to quaternary structure, monomer. Interacts with TFEB. AMPK-mediated phosphorylated form at Ser-659 interacts with KPNA1; this interaction results in nuclear translocation of ACSS2. Interacts with the 'Thr-172' phosphorylated form of PRKAA2. Interacts with CREBBP. In terms of processing, reversibly acetylated at Lys-661. The acetyl-CoA synthase activity is inhibited by acetylation and activated by deacetylation mediated by the deacetylases SIRT1 and SIRT3. In terms of tissue distribution, expressed in the hippocampus.

It is found in the cytoplasm. The protein resides in the cytosol. The protein localises to the nucleus. It carries out the reaction acetate + ATP + CoA = acetyl-CoA + AMP + diphosphate. It catalyses the reaction propanoate + ATP + CoA = propanoyl-CoA + AMP + diphosphate. Inhibited by acetylation at Lys-661 and activated by deacetylation mediated by the deacetylases SIRT1 and SIRT3. In terms of biological role, catalyzes the synthesis of acetyl-CoA from short-chain fatty acids. Acetate is the preferred substrate but can also utilize propionate with a much lower affinity. Nuclear ACSS2 promotes glucose deprivation-induced lysosomal biogenesis and autophagy, tumor cell survival and brain tumorigenesis. Glucose deprivation results in AMPK-mediated phosphorylation of ACSS2 leading to its translocation to the nucleus where it binds to TFEB and locally produces acetyl-CoA for histone acetylation in the promoter regions of TFEB target genes thereby activating their transcription. The regulation of genes associated with autophagy and lysosomal activity through ACSS2 is important for brain tumorigenesis and tumor survival. Acts as a chromatin-bound transcriptional coactivator that up-regulates histone acetylation and expression of neuronal genes. Can be recruited to the loci of memory-related neuronal genes to maintain a local acetyl-CoA pool, providing the substrate for histone acetylation and promoting the expression of specific genes, which is essential for maintaining long-term spatial memory. This is Acetyl-coenzyme A synthetase, cytoplasmic (Acss2) from Mus musculus (Mouse).